Here is a 390-residue protein sequence, read N- to C-terminus: MKFVDEASILVVAGDGGNGCVSFRREKYIPKGGPDGGDGGDGGDVWLEADENLNTLIDYRFEKSFRAERGQNGASRDCTGKRGKDVTIKVPVGTRVIDQGTGETMGDMTKHGQRLMVAKGGWHGLGNTRFKSSVNRTPRQKTMGTPGDKRDLMLELMLLADVGMLGMPNAGKSTFIRAVSAAKPKVADYPFTTLVPSLGVVRMDNEKSFVVADIPGLIEGAAEGAGLGIRFLKHLERCRVLLHLIDIDPIDGSDPVENARIIIGELEKYSQDLAAKPRWLVFNKIDLLDQAEAEEKAKAIAQALGWEDKYYMISAASQTGVKDLCWDVMTFIIENPIVQADEAKQPEKVEFMWDDYHRQQLAEVEDEAEDDWDDDWDEDDEEGVEFIYKR.

Residues 1 to 159 form the Obg domain; sequence MKFVDEASIL…RDLMLELMLL (159 aa). The tract at residues 127-147 is disordered; it reads NTRFKSSVNRTPRQKTMGTPG. Residues 129–143 show a composition bias toward polar residues; sequence RFKSSVNRTPRQKTM. In terms of domain architecture, OBG-type G spans 160-333; the sequence is ADVGMLGMPN…LCWDVMTFII (174 aa). Residues 166-173, 191-195, 213-216, 283-286, and 314-316 each bind GTP; these read GMPNAGKS, FTTLV, DIPG, NKID, and SAA. Mg(2+)-binding residues include Ser-173 and Thr-193.

It belongs to the TRAFAC class OBG-HflX-like GTPase superfamily. OBG GTPase family. In terms of assembly, monomer. The cofactor is Mg(2+).

It is found in the cytoplasm. Its function is as follows. An essential GTPase which binds GTP, GDP and possibly (p)ppGpp with moderate affinity, with high nucleotide exchange rates and a fairly low GTP hydrolysis rate. Plays a role in control of the cell cycle, stress response, ribosome biogenesis and in those bacteria that undergo differentiation, in morphogenesis control. The chain is GTPase Obg from Citrobacter koseri (strain ATCC BAA-895 / CDC 4225-83 / SGSC4696).